The primary structure comprises 722 residues: Probable acyl-activating enzyme 16, chloroplastic (722 aa).

Residues 1–47 (MASTSLGASILVSHCSSAPEFQVSGMRLVFGYKAFGCRTSRRGFRVR) constitute a chloroplast transit peptide.

This sequence belongs to the ATP-dependent AMP-binding enzyme family.

It localises to the plastid. The protein localises to the chloroplast. Its function is as follows. May be involved in the activation of fatty acids to acyl-carrier-protein. The protein is Probable acyl-activating enzyme 16, chloroplastic (AAE16) of Arabidopsis thaliana (Mouse-ear cress).